The primary structure comprises 445 residues: UPF0210 protein SPT_0285 (445 aa).

Belongs to the UPF0210 family. In terms of assembly, homodimer.

This Streptococcus pneumoniae (strain Taiwan19F-14) protein is UPF0210 protein SPT_0285.